The following is a 370-amino-acid chain: Probable G-protein coupled receptor 85 (370 aa).

The Extracellular portion of the chain corresponds to 1-25 (MANYSHAADNILQNLSPLTAFLKLT). The N-linked (GlcNAc...) asparagine glycan is linked to asparagine 3. Residues 26–46 (SLGFIIGVSVVGNLLISILLA) traverse the membrane as a helical segment. Over 47-57 (KDKTLHRAPYY) the chain is Cytoplasmic. A helical transmembrane segment spans residues 58–78 (FLLDLCCSDILRSAICFPFVF). Topologically, residues 79–96 (NSVKNGSTWTYGTLTCKV) are extracellular. Residue asparagine 83 is glycosylated (N-linked (GlcNAc...) asparagine). A disulfide bond links cysteine 94 and cysteine 172. A helical membrane pass occupies residues 97–117 (IAFLGVLSCFHTAFMLFCISV). The Cytoplasmic portion of the chain corresponds to 118-137 (TRYLAIAHHRFYTKRLTFWT). The helical transmembrane segment at 138–158 (CLAVICMVWTLSVAMAFPPVL) threads the bilayer. Topologically, residues 159-188 (DVGTYSFIREEDQCTFQHRSFRANDSLGFM) are extracellular. N-linked (GlcNAc...) asparagine glycosylation occurs at asparagine 182. A helical transmembrane segment spans residues 189-209 (LLLALILLATQLVYLKLIFFV). Topologically, residues 210-286 (HDRRKMKPVQ…FKMEKRISRM (77 aa)) are cytoplasmic. Residues 287-307 (FYIMTFLFLTLWGPYLVACYW) traverse the membrane as a helical segment. Topologically, residues 308–313 (RVFARG) are extracellular. The chain crosses the membrane as a helical span at residues 314–334 (PVVPGGFLTAAVWMSFAQAGI). Residues 335–370 (NPFVCIFSNRELRRCFSTTLLYCRKSRLPREPYCVI) are Cytoplasmic-facing.

The protein belongs to the G-protein coupled receptor 1 family. As to quaternary structure, interacts with DLG4 and DLG3.

The protein resides in the cell membrane. The protein localises to the endoplasmic reticulum. Orphan receptor. This chain is Probable G-protein coupled receptor 85 (GPR85), found in Pongo abelii (Sumatran orangutan).